The chain runs to 325 residues: Glutarate 2-hydroxylase (325 aa).

Positions 160, 162, and 292 each coordinate Fe cation.

Belongs to the glutarate hydroxylase family. As to quaternary structure, homotetramer. The cofactor is Fe(2+).

It carries out the reaction glutarate + 2-oxoglutarate + O2 = (S)-2-hydroxyglutarate + succinate + CO2. Its pathway is amino-acid degradation. In terms of biological role, acts as an alpha-ketoglutarate-dependent dioxygenase catalyzing hydroxylation of glutarate (GA) to L-2-hydroxyglutarate (L2HG). Functions in a L-lysine degradation pathway that proceeds via cadaverine, glutarate and L-2-hydroxyglutarate. This is Glutarate 2-hydroxylase from Pseudomonas putida (strain GB-1).